The sequence spans 277 residues: Myelin proteolipid protein (277 aa).

The Cytoplasmic portion of the chain corresponds to glycine 2–arginine 9. 3 S-palmitoyl cysteine lipidation sites follow: cysteine 6, cysteine 7, and cysteine 10. The helical transmembrane segment at cysteine 10–glycine 36 threads the bilayer. At histidine 37–asparagine 63 the chain is on the extracellular side. Residues valine 64–alanine 88 traverse the membrane as a helical segment. Residues glutamate 89–lysine 151 lie on the Cytoplasmic side of the membrane. Residue cysteine 109 is the site of S-palmitoyl cysteine attachment. Serine 114 carries the post-translational modification Phosphoserine. Phosphothreonine occurs at positions 116 and 118. Residues cysteine 139 and cysteine 141 are each lipidated (S-palmitoyl cysteine). The chain crosses the membrane as a helical span at residues phenylalanine 152–tyrosine 177. Over phenylalanine 178–phenylalanine 233 the chain is Extracellular. 2 disulfide bridges follow: cysteine 184–cysteine 228 and cysteine 201–cysteine 220. A lipid anchor (O-palmitoyl serine) is attached at serine 199. Residues glutamine 234–alanine 260 form a helical membrane-spanning segment. The Cytoplasmic segment spans residues alanine 261–phenylalanine 277.

This sequence belongs to the myelin proteolipid protein family. Interacts with MAL.

Its subcellular location is the cell membrane. The protein resides in the myelin membrane. In terms of biological role, this is the major myelin protein from the central nervous system. It plays an important role in the formation or maintenance of the multilamellar structure of myelin. The polypeptide is Myelin proteolipid protein (Plp1) (Mus musculus (Mouse)).